The sequence spans 431 residues: L-ornithine N(5)-monooxygenase (431 aa).

FAD-binding positions include 40 to 48 and Gln59; that span reads EKLPTFSWH. Residue Lys64 coordinates substrate. NADP(+) contacts are provided by residues 202–205 and Arg228; that span reads CGQS. Residues 242–245 and Asn273 contribute to the substrate site; that span reads NSLY. 273–275 is an NADP(+) binding site; sequence NYS. 399–401 contacts FAD; it reads TLL. Residue Ser402 coordinates substrate.

It belongs to the lysine N(6)-hydroxylase/L-ornithine N(5)-oxygenase family. It depends on FAD as a cofactor.

It localises to the cytoplasm. It is found in the nucleus. It catalyses the reaction L-ornithine + NADPH + O2 = N(5)-hydroxy-L-ornithine + NADP(+) + H2O. The enzyme catalyses L-ornithine + NADH + O2 = N(5)-hydroxy-L-ornithine + NAD(+) + H2O. The protein operates within siderophore biosynthesis; ferrichrome biosynthesis. Functionally, catalyzes the conversion of L-ornithine to N(5)-hydroxyornithine, the first step in the biosynthesis of all hydroxamate-containing siderophores, such as ferrichrome. The sequence is that of L-ornithine N(5)-monooxygenase from Schizosaccharomyces pombe (strain 972 / ATCC 24843) (Fission yeast).